A 91-amino-acid polypeptide reads, in one-letter code: Translation initiation factor IF-1 (91 aa).

One can recognise an S1-like domain in the interval 1–72; the sequence is MAKEELLEFE…DRGRINFRHK (72 aa). Residues 70 to 91 are disordered; the sequence is RHKAEGNAPPPGARRQQNFRRR.

Belongs to the IF-1 family. In terms of assembly, component of the 30S ribosomal translation pre-initiation complex which assembles on the 30S ribosome in the order IF-2 and IF-3, IF-1 and N-formylmethionyl-tRNA(fMet); mRNA recruitment can occur at any time during PIC assembly.

It is found in the cytoplasm. Its function is as follows. One of the essential components for the initiation of protein synthesis. Stabilizes the binding of IF-2 and IF-3 on the 30S subunit to which N-formylmethionyl-tRNA(fMet) subsequently binds. Helps modulate mRNA selection, yielding the 30S pre-initiation complex (PIC). Upon addition of the 50S ribosomal subunit IF-1, IF-2 and IF-3 are released leaving the mature 70S translation initiation complex. The sequence is that of Translation initiation factor IF-1 from Azorhizobium caulinodans (strain ATCC 43989 / DSM 5975 / JCM 20966 / LMG 6465 / NBRC 14845 / NCIMB 13405 / ORS 571).